A 93-amino-acid chain; its full sequence is U12-lycotoxin-Ls1e (93 aa).

An N-terminal signal peptide occupies residues 1-18; sequence MKFAVILLFTLVVLAVAS. A propeptide spanning residues 19–38 is cleaved from the precursor; the sequence is ESVEEDTREIDVEEFQEQQR.

The protein belongs to the neurotoxin 31 family. Contains 5 disulfide bonds. As to expression, expressed by the venom gland.

The protein resides in the secreted. This is U12-lycotoxin-Ls1e from Lycosa singoriensis (Wolf spider).